Reading from the N-terminus, the 242-residue chain is 6-phosphogluconolactonase (242 aa).

The protein belongs to the glucosamine/galactosamine-6-phosphate isomerase family. 6-phosphogluconolactonase subfamily.

It catalyses the reaction 6-phospho-D-glucono-1,5-lactone + H2O = 6-phospho-D-gluconate + H(+). It participates in carbohydrate degradation; pentose phosphate pathway; D-ribulose 5-phosphate from D-glucose 6-phosphate (oxidative stage): step 2/3. Its function is as follows. Hydrolysis of 6-phosphogluconolactone to 6-phosphogluconate. The protein is 6-phosphogluconolactonase (pgl) of Pseudomonas putida (Arthrobacter siderocapsulatus).